Consider the following 246-residue polypeptide: uncharacterized protein (246 aa).

This is an uncharacterized protein from Campylobacter jejuni subsp. jejuni serotype O:2 (strain ATCC 700819 / NCTC 11168).